Here is a 154-residue protein sequence, read N- to C-terminus: Ribonuclease H (154 aa).

The region spanning 9–150 (SHPHIIIYTD…ADALANKGVE (142 aa)) is the RNase H type-1 domain. Positions 18, 56, 78, and 142 each coordinate Mg(2+).

The protein belongs to the RNase H family. In terms of assembly, monomer. Mg(2+) serves as cofactor.

It is found in the cytoplasm. The enzyme catalyses Endonucleolytic cleavage to 5'-phosphomonoester.. Endonuclease that specifically degrades the RNA of RNA-DNA hybrids. This Polynucleobacter asymbioticus (strain DSM 18221 / CIP 109841 / QLW-P1DMWA-1) (Polynucleobacter necessarius subsp. asymbioticus) protein is Ribonuclease H.